We begin with the raw amino-acid sequence, 38 residues long: Large ribosomal subunit protein bL36 (38 aa).

It belongs to the bacterial ribosomal protein bL36 family.

The sequence is that of Large ribosomal subunit protein bL36 from Kosmotoga olearia (strain ATCC BAA-1733 / DSM 21960 / TBF 19.5.1).